We begin with the raw amino-acid sequence, 622 residues long: Type 2 DNA topoisomerase 6 subunit B (622 aa).

ATP is bound by residues N48, D80, 101–102 (SR), 111–118 (GQQGIGIS), and K435.

This sequence belongs to the TOP6B family. Homodimer. Heterotetramer of two Top6A and two Top6B chains.

The enzyme catalyses ATP-dependent breakage, passage and rejoining of double-stranded DNA.. Relaxes both positive and negative superturns and exhibits a strong decatenase activity. In Methanococcoides burtonii (strain DSM 6242 / NBRC 107633 / OCM 468 / ACE-M), this protein is Type 2 DNA topoisomerase 6 subunit B.